Reading from the N-terminus, the 428-residue chain is Serine--tRNA ligase (428 aa).

An L-serine-binding site is contributed by 231 to 233 (TAE). 262-264 (RAE) is a binding site for ATP. Glu-285 serves as a coordination point for L-serine. Residue 349-352 (EISS) coordinates ATP. Ser-385 lines the L-serine pocket.

The protein belongs to the class-II aminoacyl-tRNA synthetase family. Type-1 seryl-tRNA synthetase subfamily. In terms of assembly, homodimer. The tRNA molecule binds across the dimer.

The protein resides in the cytoplasm. It carries out the reaction tRNA(Ser) + L-serine + ATP = L-seryl-tRNA(Ser) + AMP + diphosphate + H(+). The enzyme catalyses tRNA(Sec) + L-serine + ATP = L-seryl-tRNA(Sec) + AMP + diphosphate + H(+). It participates in aminoacyl-tRNA biosynthesis; selenocysteinyl-tRNA(Sec) biosynthesis; L-seryl-tRNA(Sec) from L-serine and tRNA(Sec): step 1/1. Functionally, catalyzes the attachment of serine to tRNA(Ser). Is also able to aminoacylate tRNA(Sec) with serine, to form the misacylated tRNA L-seryl-tRNA(Sec), which will be further converted into selenocysteinyl-tRNA(Sec). The protein is Serine--tRNA ligase of Methylorubrum extorquens (strain PA1) (Methylobacterium extorquens).